The sequence spans 1160 residues: Transcription factor tau 138 kDa subunit (1160 aa).

Residues P475–T533 form a disordered region. Residues T480 to V490 are compositionally biased toward basic residues. Composition is skewed to polar residues over residues K491–N504 and H513–S529. Residue S546 is modified to Phosphoserine.

As to quaternary structure, component of the TFIIIC complex composed of TFC1, TFC3, TFC4, TFC6, TFC7 and TFC8. The subunits are organized in two globular domains, tauA and tauB, connected by a proteolysis-sensitive and flexible linker. Interacts with TFC1, TFC4 and TFC6.

The protein localises to the nucleus. It is found in the mitochondrion. Functionally, TFIIIC mediates tRNA and 5S RNA gene activation by binding to intragenic promoter elements. Upstream of the transcription start site, TFIIIC assembles the initiation complex TFIIIB-TFIIIC-tDNA, which is sufficient for RNA polymerase III recruitment and function. Part of the tauB domain of TFIIIC that binds boxB DNA promoter sites of tRNA and similar genes. TFC3 is essential for cell viability. Cooperates with TFC6 in DNA binding. In Saccharomyces cerevisiae (strain ATCC 204508 / S288c) (Baker's yeast), this protein is Transcription factor tau 138 kDa subunit (TFC3).